Reading from the N-terminus, the 722-residue chain is Endoglucanase F (722 aa).

The first 29 residues, 1 to 29 (MSKNFKRVGAVAVAAAMSLSIMATTSINA), serve as a signal peptide directing secretion. The interval 142-165 (PEFQDPSKYPSPLDTSQPVGRDPI) is disordered. The segment covering 154–165 (LDTSQPVGRDPI) has biased composition (polar residues). Positions 661–722 (PEKLLGDVNG…LLKKALLSIQ (62 aa)) constitute a Dockerin domain.

Belongs to the glycosyl hydrolase 48 (cellulase L) family.

The enzyme catalyses Endohydrolysis of (1-&gt;4)-beta-D-glucosidic linkages in cellulose, lichenin and cereal beta-D-glucans.. Its function is as follows. Probable endoglucanase involved in the degradation of cellulose or related beta-glucans. The sequence is that of Endoglucanase F (celCCF) from Ruminiclostridium cellulolyticum (strain ATCC 35319 / DSM 5812 / JCM 6584 / H10) (Clostridium cellulolyticum).